We begin with the raw amino-acid sequence, 46 residues long: Mu-segestritoxin-Sf1g (46 aa).

Cystine bridges form between Cys3–Cys19, Cys10–Cys22, Cys18–Cys42, and Cys24–Cys40. The keys region for toxin activity stretch occupies residues 31 to 33; that stretch reads RPW.

It belongs to the neurotoxin 16 (SFI) family. As to expression, expressed by the venom gland.

It is found in the secreted. Functionally, insecticidal toxin. It inhibits insect voltage-gated sodium channels (Nav) by partially blocking the channel pore in DUM neurons from the American cockroach, not by acting as a gating modifier. The inhibition is only partially reversible after prolonged washout. In vivo, the toxin causes flaccid paralysis followed by death when injected into Heliothis virescens larvae. It also causes uncoordinated movements followed by full paralysis to sheep blowflies (Lucilia cuprina). When the toxin is fused to snowdrop lectin, it is orally active against larvae of the tomato moth (Laconobia oleracea), the rice brown planthopper (Nilaparvata lugens), and the peach-potato aphid (Myzus persicae). This chain is Mu-segestritoxin-Sf1g, found in Segestria florentina (Tube-web spider).